The chain runs to 189 residues: Small ribosomal subunit protein uS5 (189 aa).

An S5 DRBM domain is found at 22 to 85 (FVDKLVAINR…ESAKRDLIFV (64 aa)).

It belongs to the universal ribosomal protein uS5 family. As to quaternary structure, part of the 30S ribosomal subunit. Contacts proteins S4 and S8.

In terms of biological role, with S4 and S12 plays an important role in translational accuracy. Located at the back of the 30S subunit body where it stabilizes the conformation of the head with respect to the body. In Allorhizobium ampelinum (strain ATCC BAA-846 / DSM 112012 / S4) (Agrobacterium vitis (strain S4)), this protein is Small ribosomal subunit protein uS5.